The chain runs to 162 residues: Xanthine-guanine phosphoribosyltransferase (162 aa).

Residues 41 to 42 (RG) and 92 to 100 (DDLVDTGNT) each bind 5-phospho-alpha-D-ribose 1-diphosphate. Residue aspartate 93 coordinates Mg(2+). Guanine contacts are provided by aspartate 96 and isoleucine 139. Xanthine-binding residues include aspartate 96 and isoleucine 139. Residues 96–100 (DTGNT) and 138–139 (WI) contribute to the GMP site.

The protein belongs to the purine/pyrimidine phosphoribosyltransferase family. XGPT subfamily. Homotetramer. It depends on Mg(2+) as a cofactor.

Its subcellular location is the cell inner membrane. It carries out the reaction GMP + diphosphate = guanine + 5-phospho-alpha-D-ribose 1-diphosphate. It catalyses the reaction XMP + diphosphate = xanthine + 5-phospho-alpha-D-ribose 1-diphosphate. The catalysed reaction is IMP + diphosphate = hypoxanthine + 5-phospho-alpha-D-ribose 1-diphosphate. It functions in the pathway purine metabolism; GMP biosynthesis via salvage pathway; GMP from guanine: step 1/1. Its pathway is purine metabolism; XMP biosynthesis via salvage pathway; XMP from xanthine: step 1/1. Functionally, purine salvage pathway enzyme that catalyzes the transfer of the ribosyl-5-phosphate group from 5-phospho-alpha-D-ribose 1-diphosphate (PRPP) to the N9 position of the 6-oxopurines guanine and xanthine to form the corresponding ribonucleotides GMP (guanosine 5'-monophosphate) and XMP (xanthosine 5'-monophosphate), with the release of PPi. To a lesser extent, also acts on hypoxanthine. The chain is Xanthine-guanine phosphoribosyltransferase from Chromohalobacter salexigens (strain ATCC BAA-138 / DSM 3043 / CIP 106854 / NCIMB 13768 / 1H11).